Here is a 117-residue protein sequence, read N- to C-terminus: Hainantoxin-XV-2 (117 aa).

The N-terminal stretch at 1 to 20 (MKLCAVIIASLLVCVAVASS) is a signal peptide. A disordered region spans residues 20-55 (SSDNQKEFAQEKEMTREETQSLGEHEKDDEVTGSEE). Residues 21–56 (SDNQKEFAQEKEMTREETQSLGEHEKDDEVTGSEER) constitute a propeptide that is removed on maturation. The segment covering 23-55 (NQKEFAQEKEMTREETQSLGEHEKDDEVTGSEE) has biased composition (basic and acidic residues). 4 disulfides stabilise this stretch: Cys58–Cys72, Cys65–Cys78, Cys69–Cys115, and Cys71–Cys91.

This sequence belongs to the neurotoxin 03 (Tx2) family. 02 subfamily. HNTX-XV sub-subfamily. Expressed by the venom gland.

The protein resides in the secreted. In terms of biological role, putative ion channel inhibitor. This is Hainantoxin-XV-2 from Cyriopagopus hainanus (Chinese bird spider).